The sequence spans 271 residues: MSLKFKSIAAISALIGTLTLVGCGPTEKAPNHIKVGVIVGAEQQVAEVAQKVAKEKYGLDVELVTFNDYVLPNEALSKGDIDLNAFQHKPYLDQQIKDRGYKLVSVGNSFVYPIAGYSKKIKSLDELQPGSQVALPNDPTNLGRSLLLLQSVGLIKLKDGVGLLPTVLDVVENPKNLKLVELEAPQLPRSLDDQQIALAIINTTYASQIGLTPAKDGLFVEDKESPYVNLIVAREDNKDAENVKKFVQAYQSDEVYDAANKAFNGGAVKGW.

Residues methionine 1–glycine 22 form the signal peptide. A lipid anchor (N-palmitoyl cysteine) is attached at cysteine 23. Cysteine 23 is lipidated: S-diacylglycerol cysteine.

This sequence belongs to the NlpA lipoprotein family.

It localises to the cell membrane. In terms of biological role, this protein is a component of a D-methionine permease, a binding protein-dependent, ATP-driven transport system. This is D-methionine-binding lipoprotein MetQ (metQ) from Yersinia pestis.